The chain runs to 108 residues: Small ribosomal subunit protein bS16 (108 aa).

The protein belongs to the bacterial ribosomal protein bS16 family.

The protein is Small ribosomal subunit protein bS16 of Orientia tsutsugamushi (strain Boryong) (Rickettsia tsutsugamushi).